The chain runs to 243 residues: Ubiquinone/menaquinone biosynthesis C-methyltransferase UbiE (243 aa).

Residues T69, D90, and 116-117 contribute to the S-adenosyl-L-methionine site; that span reads DA.

Belongs to the class I-like SAM-binding methyltransferase superfamily. MenG/UbiE family.

It catalyses the reaction a 2-demethylmenaquinol + S-adenosyl-L-methionine = a menaquinol + S-adenosyl-L-homocysteine + H(+). The enzyme catalyses a 2-methoxy-6-(all-trans-polyprenyl)benzene-1,4-diol + S-adenosyl-L-methionine = a 5-methoxy-2-methyl-3-(all-trans-polyprenyl)benzene-1,4-diol + S-adenosyl-L-homocysteine + H(+). It functions in the pathway quinol/quinone metabolism; menaquinone biosynthesis; menaquinol from 1,4-dihydroxy-2-naphthoate: step 2/2. It participates in cofactor biosynthesis; ubiquinone biosynthesis. Functionally, methyltransferase required for the conversion of demethylmenaquinol (DMKH2) to menaquinol (MKH2) and the conversion of 2-polyprenyl-6-methoxy-1,4-benzoquinol (DDMQH2) to 2-polyprenyl-3-methyl-6-methoxy-1,4-benzoquinol (DMQH2). The protein is Ubiquinone/menaquinone biosynthesis C-methyltransferase UbiE of Paraburkholderia phymatum (strain DSM 17167 / CIP 108236 / LMG 21445 / STM815) (Burkholderia phymatum).